Here is a 225-residue protein sequence, read N- to C-terminus: UPF0758 protein XOO0495 (225 aa).

Residues 102–224 form the MPN domain; sequence ALSDPPSVGR…PVSLAERGWL (123 aa). Residues His-173, His-175, and Asp-186 each coordinate Zn(2+). A JAMM motif motif is present at residues 173-186; it reads HNHPSGNPEPSKAD.

Belongs to the UPF0758 family.

This is UPF0758 protein XOO0495 from Xanthomonas oryzae pv. oryzae (strain KACC10331 / KXO85).